We begin with the raw amino-acid sequence, 623 residues long: Glutathione import ATP-binding protein GsiA (623 aa).

2 ABC transporter domains span residues Val18–Leu272 and Leu317–Met567. ATP contacts are provided by residues Gly52–Ser59 and Gly360–Ser367.

The protein belongs to the ABC transporter superfamily. Glutathione importer (TC 3.A.1.5.11) family. As to quaternary structure, the complex is composed of two ATP-binding proteins (GsiA), two transmembrane proteins (GsiC and GsiD) and a solute-binding protein (GsiB).

It localises to the cell inner membrane. It carries out the reaction glutathione(out) + ATP + H2O = glutathione(in) + ADP + phosphate + H(+). In terms of biological role, part of the ABC transporter complex GsiABCD involved in glutathione import. Responsible for energy coupling to the transport system. The protein is Glutathione import ATP-binding protein GsiA of Pectobacterium atrosepticum (strain SCRI 1043 / ATCC BAA-672) (Erwinia carotovora subsp. atroseptica).